Reading from the N-terminus, the 392-residue chain is Chloramphenicol resistance protein (392 aa).

12 helical membrane-spanning segments follow: residues 6–26 (YLLA…AGLV), 42–62 (TLTS…AALA), 71–91 (LLGF…TTSF), 100–120 (VAAL…AALV), 129–149 (LAVL…GGSL), 160–180 (FWAV…AIPA), 205–225 (LLLA…SFTF), 239–259 (LWIS…VTVA), 268–288 (AQVL…LAML), 294–314 (ALLT…STLI), 332–352 (ATAA…TTLG), and 358–378 (LGPL…AFPF).

Belongs to the major facilitator superfamily.

Its subcellular location is the cell membrane. This chain is Chloramphenicol resistance protein (cmlR), found in Streptomyces lividans.